A 446-amino-acid polypeptide reads, in one-letter code: Long-chain fatty acid transport protein (446 aa).

The first 25 residues, 1-25, serve as a signal peptide directing secretion; that stretch reads MSQKTLFTKSALAVAVALISTQAWS.

The protein belongs to the OmpP1/FadL family. In terms of assembly, has been isolated from outer membrane preparation as a homodimer.

It localises to the cell outer membrane. Involved in translocation of long-chain fatty acids across the outer membrane. It is a receptor for the bacteriophage T2. FadL may form a specific channel. The polypeptide is Long-chain fatty acid transport protein (fadL) (Escherichia coli (strain K12)).